We begin with the raw amino-acid sequence, 209 residues long: Imidazole glycerol phosphate synthase subunit HisH (209 aa).

Residues 1-205 enclose the Glutamine amidotransferase type-1 domain; the sequence is MIAIIDYGMG…KGVVETWKSS (205 aa). Cys79 (nucleophile) is an active-site residue. Residues His180 and Glu182 contribute to the active site.

In terms of assembly, heterodimer of HisH and HisF.

Its subcellular location is the cytoplasm. The enzyme catalyses 5-[(5-phospho-1-deoxy-D-ribulos-1-ylimino)methylamino]-1-(5-phospho-beta-D-ribosyl)imidazole-4-carboxamide + L-glutamine = D-erythro-1-(imidazol-4-yl)glycerol 3-phosphate + 5-amino-1-(5-phospho-beta-D-ribosyl)imidazole-4-carboxamide + L-glutamate + H(+). It catalyses the reaction L-glutamine + H2O = L-glutamate + NH4(+). It functions in the pathway amino-acid biosynthesis; L-histidine biosynthesis; L-histidine from 5-phospho-alpha-D-ribose 1-diphosphate: step 5/9. IGPS catalyzes the conversion of PRFAR and glutamine to IGP, AICAR and glutamate. The HisH subunit catalyzes the hydrolysis of glutamine to glutamate and ammonia as part of the synthesis of IGP and AICAR. The resulting ammonia molecule is channeled to the active site of HisF. The sequence is that of Imidazole glycerol phosphate synthase subunit HisH from Bacillus thuringiensis subsp. konkukian (strain 97-27).